Here is a 212-residue protein sequence, read N- to C-terminus: Uracil phosphoribosyltransferase (212 aa).

Residues Arg78, Arg103, and Asp130–Ser138 contribute to the 5-phospho-alpha-D-ribose 1-diphosphate site. Uracil contacts are provided by residues Ile193 and Gly198–Ala200. Residue Asp199 participates in 5-phospho-alpha-D-ribose 1-diphosphate binding.

It belongs to the UPRTase family. The cofactor is Mg(2+).

The enzyme catalyses UMP + diphosphate = 5-phospho-alpha-D-ribose 1-diphosphate + uracil. It participates in pyrimidine metabolism; UMP biosynthesis via salvage pathway; UMP from uracil: step 1/1. With respect to regulation, allosterically activated by GTP. In terms of biological role, catalyzes the conversion of uracil and 5-phospho-alpha-D-ribose 1-diphosphate (PRPP) to UMP and diphosphate. The polypeptide is Uracil phosphoribosyltransferase (Pseudomonas fluorescens (strain SBW25)).